A 416-amino-acid polypeptide reads, in one-letter code: GTPase Obg (416 aa).

The Obg domain occupies 1-157 (MFQDVLVITV…RRLRLELMLI (157 aa)). Disordered stretches follow at residues 25 to 44 (EKFV…GGSV) and 62 to 82 (TYKA…RGGE). A compositionally biased stretch (gly residues) spans 32 to 42 (GPDGGDGGRGG). Basic and acidic residues predominate over residues 63 to 72 (YKAEDGEHGR). One can recognise an OBG-type G domain in the interval 158 to 324 (ADVGLVGYPN…LKEALHALVR (167 aa)). Residues 164 to 171 (GYPNAGKS), 189 to 193 (FTTLS), 211 to 214 (DIPG), 277 to 280 (NKVD), and 305 to 307 (SAL) contribute to the GTP site. Mg(2+)-binding residues include Ser171 and Thr191. The region spanning 336–414 (PRKEVQAGVE…IGGLEFEYIP (79 aa)) is the OCT domain.

Belongs to the TRAFAC class OBG-HflX-like GTPase superfamily. OBG GTPase family. In terms of assembly, monomer. Mg(2+) serves as cofactor.

It is found in the cytoplasm. Functionally, an essential GTPase which binds GTP, GDP and possibly (p)ppGpp with moderate affinity, with high nucleotide exchange rates and a fairly low GTP hydrolysis rate. Plays a role in control of the cell cycle, stress response, ribosome biogenesis and in those bacteria that undergo differentiation, in morphogenesis control. The polypeptide is GTPase Obg (Thermus thermophilus (strain ATCC 27634 / DSM 579 / HB8)).